An 81-amino-acid chain; its full sequence is Defensin-like protein 311 (81 aa).

Positions 1–24 (MEKISAFFVILFLVSSCLVTMSVG) are cleaved as a signal peptide. 3 cysteine pairs are disulfide-bonded: cysteine 27-cysteine 50, cysteine 33-cysteine 57, and cysteine 41-cysteine 59.

Belongs to the DEFL family.

It is found in the secreted. This Arabidopsis thaliana (Mouse-ear cress) protein is Defensin-like protein 311.